The chain runs to 181 residues: Protein Ves (181 aa).

Belongs to the Ves family.

This is Protein Ves from Cronobacter sakazakii (strain ATCC BAA-894) (Enterobacter sakazakii).